The following is a 386-amino-acid chain: Phosphoglycerate kinase (386 aa).

Substrate contacts are provided by residues 21–23 (DLN), Arg36, 59–62 (HLGR), Arg113, and Arg146. Residues Lys197, Glu314, and 340-343 (GGDT) each bind ATP.

This sequence belongs to the phosphoglycerate kinase family. In terms of assembly, monomer.

The protein localises to the cytoplasm. It carries out the reaction (2R)-3-phosphoglycerate + ATP = (2R)-3-phospho-glyceroyl phosphate + ADP. The protein operates within carbohydrate degradation; glycolysis; pyruvate from D-glyceraldehyde 3-phosphate: step 2/5. The sequence is that of Phosphoglycerate kinase from Vibrio campbellii (strain ATCC BAA-1116).